Reading from the N-terminus, the 416-residue chain is Advanced glycosylation end product-specific receptor (416 aa).

Residues Met1–Gly22 form the signal peptide. In terms of domain architecture, Ig-like V-type spans Asp23–Arg115. Residues Asp23–Ala352 lie on the Extracellular side of the membrane. N-linked (GlcNAc...) asparagine glycosylation is found at Asn25 and Asn80. Disulfide bonds link Cys38/Cys98 and Cys143/Cys207. Ig-like C2-type domains are found at residues Pro123–His220 and Pro238–Ser327. Residues Leu353–Trp373 traverse the membrane as a helical segment. Residues His374–Pro416 are Cytoplasmic-facing. A disordered region spans residues Arg377 to Pro416. The span at Asn389–Ala408 shows a compositional bias: acidic residues.

In terms of assembly, constitutive homodimer; disulfide-linked. Forms homooligomers. Interacts with S100A1 and APP. Interacts with S100B, S100A12 and S100A14. Interacts with TIRAP. Interacts with HMGB1. Interacts with LGP2; this interaction plays an important role in AGER-mediated pro-inflammatory responses and cytokine release. Interacts with double-strand break repair protein MRE11 which is a core component of the MRN complex; the interaction enhances MRE11 endonuclease activity and promotes DNA repair. Interacts with the MCM2-7 complex via interaction with complex member MCM2; the interaction is increased following DNA replication stress and stabilizes the MCM2-7 complex at replication forks. Post-translationally, phosphorylated on its cytoplasmic domain by PKCzeta/PRKCZ upon ligand binding. Phosphorylated by ATM following DNA damage. In terms of processing, targeted by the ubiquitin E3 ligase subunit FBXO10 to mediate its ubiquitination and degradation. Endothelial cells.

The protein localises to the cell membrane. The protein resides in the cell projection. It localises to the phagocytic cup. It is found in the early endosome. Its subcellular location is the nucleus. Its function is as follows. Cell surface pattern recognition receptor that senses endogenous stress signals with a broad ligand repertoire including advanced glycation end products, S100 proteins, high-mobility group box 1 protein/HMGB1, amyloid beta/APP oligomers, nucleic acids, histones, phospholipids and glycosaminoglycans. Advanced glycosylation end products are nonenzymatically glycosylated proteins which accumulate in vascular tissue in aging and at an accelerated rate in diabetes. These ligands accumulate at inflammatory sites during the pathogenesis of various diseases including diabetes, vascular complications, neurodegenerative disorders and cancers, and RAGE transduces their binding into pro-inflammatory responses. Upon ligand binding, uses TIRAP and MYD88 as adapters to transduce the signal ultimately leading to the induction of inflammatory cytokines IL6, IL8 and TNFalpha through activation of NF-kappa-B. Interaction with S100A12 on endothelium, mononuclear phagocytes, and lymphocytes triggers cellular activation, with generation of key pro-inflammatory mediators. Interaction with S100B after myocardial infarction may play a role in myocyte apoptosis by activating ERK1/2 and p53/TP53 signaling. Contributes to the translocation of amyloid-beta peptide (ABPP) across the cell membrane from the extracellular to the intracellular space in cortical neurons. ABPP-initiated RAGE signaling, especially stimulation of p38 mitogen-activated protein kinase (MAPK), has the capacity to drive a transport system delivering ABPP as a complex with RAGE to the intraneuronal space. Participates in endothelial albumin transcytosis together with HMGB1 through the RAGE/SRC/Caveolin-1 pathway, leading to endothelial hyperpermeability. Mediates the loading of HMGB1 in extracellular vesicles (EVs) that shuttle HMGB1 to hepatocytes by transferrin-mediated endocytosis and subsequently promote hepatocyte pyroptosis by activating the NLRP3 inflammasome. Binds to DNA and promotes extracellular hypomethylated DNA (CpG DNA) uptake by cells via the endosomal route to activate inflammatory responses. Mediates phagocytosis by non-professional phagocytes (NPP) and this is enhanced by binding to ligands including RNA, DNA, HMGB1 and histones. Promotes NPP-mediated phagocytosis of Saccharomyces cerevisiae spores by binding to RNA attached to the spore wall. Also promotes NPP-mediated phagocytosis of apoptotic cells. Following DNA damage, recruited to DNA double-strand break sites where it colocalizes with the MRN repair complex via interaction with double-strand break repair protein MRE11. Enhances the endonuclease activity of MRE11, promoting the end resection of damaged DNA. Promotes DNA damage repair in trophoblasts which enhances trophoblast invasion and contributes to placental development and maintenance. Protects cells from DNA replication stress by localizing to damaged replication forks where it stabilizes the MCM2-7 complex and promotes faithful progression of the replication fork. The protein is Advanced glycosylation end product-specific receptor (AGER) of Bos taurus (Bovine).